The chain runs to 257 residues: Hydroxyacylglutathione hydrolase (257 aa).

7 residues coordinate Zn(2+): histidine 54, histidine 56, aspartate 58, histidine 59, histidine 113, aspartate 137, and histidine 175.

This sequence belongs to the metallo-beta-lactamase superfamily. Glyoxalase II family. Monomer. Zn(2+) is required as a cofactor.

The enzyme catalyses an S-(2-hydroxyacyl)glutathione + H2O = a 2-hydroxy carboxylate + glutathione + H(+). It functions in the pathway secondary metabolite metabolism; methylglyoxal degradation; (R)-lactate from methylglyoxal: step 2/2. Functionally, thiolesterase that catalyzes the hydrolysis of S-D-lactoyl-glutathione to form glutathione and D-lactic acid. This chain is Hydroxyacylglutathione hydrolase, found in Trichormus variabilis (strain ATCC 29413 / PCC 7937) (Anabaena variabilis).